Here is an 86-residue protein sequence, read N- to C-terminus: Large ribosomal subunit protein eL43 (86 aa).

Zn(2+) contacts are provided by Cys38, Cys41, Cys57, and Cys60. A C4-type zinc finger spans residues 38–60; sequence CPFCGSTGTVRRVSVGVWSCRKC.

Belongs to the eukaryotic ribosomal protein eL43 family. Putative zinc-binding subfamily. As to quaternary structure, part of the 50S ribosomal subunit. Zn(2+) serves as cofactor.

In terms of biological role, binds to the 23S rRNA. In Aeropyrum pernix (strain ATCC 700893 / DSM 11879 / JCM 9820 / NBRC 100138 / K1), this protein is Large ribosomal subunit protein eL43.